Here is a 200-residue protein sequence, read N- to C-terminus: Probable GTP-binding protein EngB (200 aa).

The region spanning 26–200 (SIPEVALAGR…IYEIAQCIKK (175 aa)) is the EngB-type G domain. Residues 34–41 (GRSNVGKS), 61–65 (GCTRQ), 80–83 (DLPG), 147–150 (TKID), and 179–181 (VSS) each bind GTP. Serine 41 and threonine 63 together coordinate Mg(2+).

This sequence belongs to the TRAFAC class TrmE-Era-EngA-EngB-Septin-like GTPase superfamily. EngB GTPase family. Mg(2+) is required as a cofactor.

Its function is as follows. Necessary for normal cell division and for the maintenance of normal septation. This chain is Probable GTP-binding protein EngB, found in Ehrlichia ruminantium (strain Gardel).